A 227-amino-acid polypeptide reads, in one-letter code: Lipoprotein-releasing system ATP-binding protein LolD (227 aa).

The ABC transporter domain maps to 7–227 (LKLTGVERHY…TISDGKVVEF (221 aa)). Residue 43–50 (APSGTGKS) coordinates ATP.

It belongs to the ABC transporter superfamily. Lipoprotein translocase (TC 3.A.1.125) family. As to quaternary structure, the complex is composed of two ATP-binding proteins (LolD) and two transmembrane proteins (LolC and LolE).

The protein localises to the cell inner membrane. Part of the ABC transporter complex LolCDE involved in the translocation of mature outer membrane-directed lipoproteins, from the inner membrane to the periplasmic chaperone, LolA. Responsible for the formation of the LolA-lipoprotein complex in an ATP-dependent manner. This chain is Lipoprotein-releasing system ATP-binding protein LolD, found in Rhizobium etli (strain ATCC 51251 / DSM 11541 / JCM 21823 / NBRC 15573 / CFN 42).